Consider the following 310-residue polypeptide: Apolipoprotein E (310 aa).

The first 18 residues, 1–18 (MKVLWAALVVTLLAGCQA), serve as a signal peptide directing secretion. 4 consecutive repeat copies span residues 77 to 98 (ALMEETMKEVKTYKAQLEQQLG), 99 to 120 (PTAQETQARVSKELQAAQARLG), 121 to 142 (ADMEDVRNRLVQYRSELQAMMG), and 143 to 164 (QSTEELRGRLNSHLRKLRKRLL). The tract at residues 77–248 (ALMEETMKEV…RLDEVREQVQ (172 aa)) is 8 X 22 AA approximate tandem repeats. Met-140 bears the Methionine sulfoxide mark. Ser-144 carries the phosphoserine modification. The interval 155–165 (HLRKLRKRLLR) is LDL and other lipoprotein receptors binding. Residue 159–162 (LRKR) participates in heparin binding. The segment at residues 165 to 186 (RDAEDLQKRLAVYQAGIREGAE) is a repeat. 3 repeat units span residues 187–204 (RSVNTLRERLRPLVEQAA), 205–226 (TVRSLISKPLQERAEAWGQRLR), and 227–248 (GRLEKVGTQAGDRLDEVREQVQ). The tract at residues 203–283 (AATVRSLISK…SWFEPLVQDM (81 aa)) is lipid-binding and lipoprotein association. 222–229 (GQRLRGRL) contacts heparin. The segment at 259 to 310 (NQMRLQAEAFHARLKSWFEPLVQDMQQKWAELVEKVQLAVGTSPTSESSEKQ) is homooligomerization. Positions 271–283 (RLKSWFEPLVQDM) are specificity for association with VLDL.

Belongs to the apolipoprotein A1/A4/E family. Homotetramer. May interact with ABCA1; functionally associated with ABCA1 in the biogenesis of HDLs. May interact with APP/A4 amyloid-beta peptide; the interaction is extremely stable in vitro but its physiological significance is unclear. May interact with MAPT. May interact with MAP2. In the cerebrospinal fluid, interacts with secreted SORL1. Interacts with PMEL; this allows the loading of PMEL luminal fragment on ILVs to induce fibril nucleation. In terms of processing, APOE exists as multiple glycosylated and sialylated glycoforms within cells and in plasma. The extent of glycosylation and sialylation are tissue and context specific. Glycated in plasma VLDL. Post-translationally, phosphorylated by FAM20C in the extracellular medium.

It is found in the secreted. Its subcellular location is the extracellular space. It localises to the extracellular matrix. The protein resides in the extracellular vesicle. The protein localises to the endosome. It is found in the multivesicular body. In terms of biological role, APOE is an apolipoprotein, a protein associating with lipid particles, that mainly functions in lipoprotein-mediated lipid transport between organs via the plasma and interstitial fluids. APOE is a core component of plasma lipoproteins and is involved in their production, conversion and clearance. Apolipoproteins are amphipathic molecules that interact both with lipids of the lipoprotein particle core and the aqueous environment of the plasma. As such, APOE associates with chylomicrons, chylomicron remnants, very low density lipoproteins (VLDL) and intermediate density lipoproteins (IDL) but shows a preferential binding to high-density lipoproteins (HDL). It also binds a wide range of cellular receptors including the LDL receptor/LDLR, the LDL receptor-related proteins LRP1, LRP2 and LRP8 and the very low-density lipoprotein receptor/VLDLR that mediate the cellular uptake of the APOE-containing lipoprotein particles. Finally, APOE also has a heparin-binding activity and binds heparan-sulfate proteoglycans on the surface of cells, a property that supports the capture and the receptor-mediated uptake of APOE-containing lipoproteins by cells. A main function of APOE is to mediate lipoprotein clearance through the uptake of chylomicrons, VLDLs, and HDLs by hepatocytes. APOE is also involved in the biosynthesis by the liver of VLDLs as well as their uptake by peripheral tissues ensuring the delivery of triglycerides and energy storage in muscle, heart and adipose tissues. By participating in the lipoprotein-mediated distribution of lipids among tissues, APOE plays a critical role in plasma and tissues lipid homeostasis. APOE is also involved in two steps of reverse cholesterol transport, the HDLs-mediated transport of cholesterol from peripheral tissues to the liver, and thereby plays an important role in cholesterol homeostasis. First, it is functionally associated with ABCA1 in the biogenesis of HDLs in tissues. Second, it is enriched in circulating HDLs and mediates their uptake by hepatocytes. APOE also plays an important role in lipid transport in the central nervous system, regulating neuron survival and sprouting. This is Apolipoprotein E (APOE) from Tapirus terrestris (Lowland tapir).